Reading from the N-terminus, the 392-residue chain is Small ribosomal subunit protein bS1 (392 aa).

S1 motif domains lie at 16-90 (GDKV…LSKR), 108-173 (DEII…LSRK), 194-262 (GDVI…LSIK), and 279-348 (DDVI…LSIK).

Belongs to the bacterial ribosomal protein bS1 family.

Its function is as follows. Binds mRNA; thus facilitating recognition of the initiation point. It is needed to translate mRNA with a short Shine-Dalgarno (SD) purine-rich sequence. The protein is Small ribosomal subunit protein bS1 (rpsA) of Staphylococcus haemolyticus (strain JCSC1435).